A 260-amino-acid polypeptide reads, in one-letter code: 3'-5' ssDNA/RNA exonuclease TatD (260 aa).

A divalent metal cation is bound by residues E92, H128, and H153.

The protein belongs to the metallo-dependent hydrolases superfamily. TatD-type hydrolase family. TatD subfamily. In terms of assembly, monomer. It depends on Mg(2+) as a cofactor.

It is found in the cytoplasm. Functionally, 3'-5' exonuclease that prefers single-stranded DNA and RNA. May play a role in the H(2)O(2)-induced DNA damage repair. The sequence is that of 3'-5' ssDNA/RNA exonuclease TatD from Yersinia pseudotuberculosis serotype O:3 (strain YPIII).